An 839-amino-acid polypeptide reads, in one-letter code: Genome polyprotein (839 aa).

Over residues 55-66 (TAEVGSHQSEPL) the composition is skewed to polar residues. The tract at residues 55 to 76 (TAEVGSHQSEPLKTSVDKPGSK) is disordered. 2 consecutive short sequence motifs ((L)YPX(n)L motif) follow at residues 167 to 171 (YPHGL) and 200 to 205 (YPVWEL). The span at 496–510 (SGGFSTTVSTEQNVP) shows a compositional bias: polar residues. Disordered stretches follow at residues 496–530 (SGGFSTTVSTEQNVPDPQVGITTPKDLKGKANKGK) and 773–792 (GDLESSVDDPRTDEDRRFES). The involved in P1-2A pentamerization stretch occupies residues 766–836 (MLDRIAGGDL…RKLKGLFSQS (71 aa)). Positions 780 to 792 (DDPRTDEDRRFES) are enriched in basic and acidic residues.

The protein belongs to the picornaviridae polyprotein family. As to quaternary structure, homodimer. Homomultimer; probably interacts with membranes in a multimeric form. Seems to assemble into amyloid-like fibers. In terms of assembly, homopentamer. Homooligomer. Interacts with capsid protein VP2. Interacts with capsid protein VP3. As to quaternary structure, interacts with capsid protein VP1. Interacts with capsid protein VP3. In terms of assembly, interacts with capsid protein VP1. Interacts with capsid protein VP2. Specific enzymatic cleavages by viral protease in vivo yield a variety of precursors and mature proteins. Polyprotein processing intermediates are produced, such as P1-2A which is a functional precursor of the structural proteins, VP0 which is a VP4-VP2 precursor, VP1-2A precursor, 3ABC precursor which is a stable and catalytically active precursor of 3A, 3B and 3C proteins, 3AB and 3CD precursors. The assembly signal 2A is removed from VP1-2A by a host protease, possibly host Cathepsin L. This cleavage occurs over a region of 3 amino-acids probably generating VP1 proteins with heterogeneous C-termini. Post-translationally, during virion maturation, immature virions are rendered infectious following cleavage of VP0 into VP4 and VP2. This maturation seems to be an autocatalytic event triggered by the presence of RNA in the capsid and is followed by a conformational change of the particle. In terms of processing, the assembly signal 2A is removed from VP1-2A by a host protease, possibly host Cathepsin L in naked virions. This cleavage does not occur in enveloped virions. This cleavage occurs over a region of 3 amino-acids probably generating VP1 proteins with heterogeneous C-termini. Unlike other picornaviruses, does not seem to be myristoylated.

The protein localises to the virion. Its subcellular location is the host endosome. It is found in the host multivesicular body. The protein resides in the host membrane. Functionally, capsid proteins VP1, VP2, and VP3 form a closed capsid enclosing the viral positive strand RNA genome. All these proteins contain a beta-sheet structure called beta-barrel jelly roll. Together they form an icosahedral capsid (T=3) composed of 60 copies of each VP1, VP2, and VP3, with a diameter of approximately 300 Angstroms. VP1 is situated at the 12 fivefold axes, whereas VP2 and VP3 are located at the quasi-sixfold axes. The naked capsid interacts with the host receptor HAVCR1 to provide virion attachment to and probably entry into the target cell. In terms of biological role, VP0 precursor is a component of the immature procapsids. Plays a role in the assembly of the 12 pentamers into an icosahedral structure. Has not been detected in mature virions, supposedly owing to its small size. Its function is as follows. Precursor component of immature procapsids that corresponds to an extended form of the structural protein VP1. After maturation, possibly by the host Cathepsin L, the assembly signal 2A is cleaved to give rise to the mature VP1 protein. Functionally, affects membrane integrity and causes an increase in membrane permeability. In terms of biological role, functions as a viroporin. Affects membrane integrity and causes an increase in membrane permeability. Involved in host intracellular membrane rearrangements probably to give rise to the viral factories. Does not disrupt calcium homeostasis or glycoprotein trafficking. Antagonizes the innate immune response of the host by suppressing IFN-beta synthesis, which it achieves by interfering with the RIG-I/IFIH1 pathway. This chain is Genome polyprotein, found in Callithrix (Owl-faced monkey).